Consider the following 157-residue polypeptide: Ribosome maturation factor RimP (157 aa).

Belongs to the RimP family.

The protein resides in the cytoplasm. Functionally, required for maturation of 30S ribosomal subunits. This is Ribosome maturation factor RimP from Thermosynechococcus vestitus (strain NIES-2133 / IAM M-273 / BP-1).